Here is a 606-residue protein sequence, read N- to C-terminus: Leucine-rich repeat and immunoglobulin-like domain-containing nogo receptor-interacting protein 2 (606 aa).

Positions 1–27 (MLHTAIPCWQPFLGLAVVLLLMGSTIG) are cleaved as a signal peptide. The 30-residue stretch at 28–57 (CPARCECSAQNKSVSCHRRRLLAIPEGIPI) folds into the LRRNT domain. Topologically, residues 28 to 545 (CPARCECSAQ…LDLKTILVST (518 aa)) are extracellular. Asn-38 carries N-linked (GlcNAc...) asparagine glycosylation. 12 LRR repeats span residues 58–79 (ETKI…EFIS), 82–103 (LLEE…AFNN), 106–127 (NLRS…VFTG), 130–151 (NLTK…MFQD), 154–175 (NLKS…AFSG), 178–199 (SLEQ…ALSH), 202–223 (SLIA…AFKR), 226–247 (HLKN…NSLY), 250–271 (NLTS…AFKH), 274–295 (YLTH…MFSD), 298–319 (RLQE…SFQG), and 322–343 (FLRV…VFSS). Asn-130 is a glycosylation site (N-linked (GlcNAc...) asparagine). A glycan (N-linked (GlcNAc...) asparagine) is linked at Asn-188. N-linked (GlcNAc...) asparagine glycosylation is found at Asn-250, Asn-260, and Asn-279. Asn-327 is a glycosylation site (N-linked (GlcNAc...) asparagine). The LRRCT domain maps to 355-409 (NPLACDCRLLWLLQRQPNLQFGGQQPMCAGPDTIRERSFKDFHSTALSFYFTCKK). A disulfide bridge links Cys-432 with Cys-483. Residues Asn-491, Asn-522, and Asn-527 are each glycosylated (N-linked (GlcNAc...) asparagine). The chain crosses the membrane as a helical span at residues 546–566 (AMGCFTFLGVVLFCFLLLFVW). At 567–606 (SRGKGKHKNSIDLEYVPRKNNGAVVEGEVAGPRRFNMKMI) the chain is on the cytoplasmic side.

The protein localises to the membrane. This chain is Leucine-rich repeat and immunoglobulin-like domain-containing nogo receptor-interacting protein 2 (Lingo2), found in Mus musculus (Mouse).